The primary structure comprises 317 residues: Methyltransferase CPUR_05424 (317 aa).

Positions 57-149 (DVGAGNGPYA…QLRPGGTFAC (93 aa)) are methyltransferase domain.

It belongs to the methyltransferase superfamily.

Its pathway is pigment biosynthesis. Its function is as follows. Methyltransferase; part of the ergochrome gene cluster responsible for the typical purple-black color of the ergot sclerotia. The ergochrome gene cluster produces several ergot pigments including the yellow ergochrome secalonic acid and its derivatives, as well as the red anthraquinones endocrocin and clavorubin. The pathway begins with the synthesis of atrochrysone thioester by the polyketide synthase (PKS) CPUR_05437. The atrochrysone carboxyl ACP thioesterase CPUR_05436 then breaks the thioester bond and releases the atrochrysone carboxylic acid from CPUR_05437. The atrochrysone carboxylic acid is then converted to atrochrysone which is further transformed into emodin anthrone. The next step is performed by the anthrone oxygenase CPUR_05434 that catalyzes the oxidation of emodinanthrone to emodin. Emodin is further modified to yield monodictyphenone via several steps involving CPUR_05427, CPUR_05428, CPUR_05429 and CPUR_05430. The short chain dehydrogenase/reductase CPUR_05418 then catalyzes the C-5 ketoreduction to give the xanthone skeleton of the monomeric units. Ergochromes formation requires further dimerization steps of different xanthone units, probably catalyzed by the cytochrome P450 monooxygenase CPUR_05419. CPUR_05425, CPUR_05426 and CPUR_05431 are unique to Claviceps, thus it is likely that they are involved in further modification of xanthone units or in their dimerization. The yellow ergochromes and the red anthraquinone pigments endocrocin and clavorubin are products from the same PKS derived precursors and the latter are likely shunt products in the pathway of xanthone biosynthesis. It is proposed that atrochrysone carboxylic acid released from the PKS CPUR_05437 can also be converted to endocrocin anthrone which is further oxidized into endocrocin by CPUR_05435. Endocrocin could be then modified to clavorubin, possibly by CPUR_05423 and CPUR_05431. Clavorubin is the principal anthraquinone metabolite produced by the cluster with a much higher yield compared to endocrocin. This chain is Methyltransferase CPUR_05424, found in Claviceps purpurea (strain 20.1) (Ergot fungus).